The primary structure comprises 253 residues: Indole-3-glycerol phosphate synthase (253 aa).

It belongs to the TrpC family.

The catalysed reaction is 1-(2-carboxyphenylamino)-1-deoxy-D-ribulose 5-phosphate + H(+) = (1S,2R)-1-C-(indol-3-yl)glycerol 3-phosphate + CO2 + H2O. It functions in the pathway amino-acid biosynthesis; L-tryptophan biosynthesis; L-tryptophan from chorismate: step 4/5. The protein is Indole-3-glycerol phosphate synthase of Bacillus cereus (strain ATCC 10987 / NRS 248).